The following is a 235-amino-acid chain: Uridylate kinase (235 aa).

8–11 (KFSG) lines the ATP pocket. An involved in allosteric activation by GTP region spans residues 16–21 (GAEGYG). Glycine 50 lines the UMP pocket. Positions 51 and 55 each coordinate ATP. Residues aspartate 71 and 132-139 (TGNPYFTT) contribute to the UMP site. ATP is bound by residues threonine 159, tyrosine 165, and aspartate 168.

This sequence belongs to the UMP kinase family. As to quaternary structure, homohexamer.

It localises to the cytoplasm. It carries out the reaction UMP + ATP = UDP + ADP. The protein operates within pyrimidine metabolism; CTP biosynthesis via de novo pathway; UDP from UMP (UMPK route): step 1/1. Its activity is regulated as follows. Allosterically activated by GTP. Inhibited by UTP. Its function is as follows. Catalyzes the reversible phosphorylation of UMP to UDP. The chain is Uridylate kinase from Aliarcobacter butzleri (strain RM4018) (Arcobacter butzleri).